Reading from the N-terminus, the 484-residue chain is Protein nucleotidyltransferase YdiU (484 aa).

8 residues coordinate ATP: Gly81, Gly83, Arg84, Lys103, Asp115, Gly116, Arg166, and Arg173. The Proton acceptor role is filled by Asp244. Asn245 and Asp254 together coordinate Mg(2+). An ATP-binding site is contributed by Asp254.

The protein belongs to the SELO family. Mg(2+) serves as cofactor. It depends on Mn(2+) as a cofactor.

The catalysed reaction is L-seryl-[protein] + ATP = 3-O-(5'-adenylyl)-L-seryl-[protein] + diphosphate. It catalyses the reaction L-threonyl-[protein] + ATP = 3-O-(5'-adenylyl)-L-threonyl-[protein] + diphosphate. The enzyme catalyses L-tyrosyl-[protein] + ATP = O-(5'-adenylyl)-L-tyrosyl-[protein] + diphosphate. It carries out the reaction L-histidyl-[protein] + UTP = N(tele)-(5'-uridylyl)-L-histidyl-[protein] + diphosphate. The catalysed reaction is L-seryl-[protein] + UTP = O-(5'-uridylyl)-L-seryl-[protein] + diphosphate. It catalyses the reaction L-tyrosyl-[protein] + UTP = O-(5'-uridylyl)-L-tyrosyl-[protein] + diphosphate. Nucleotidyltransferase involved in the post-translational modification of proteins. It can catalyze the addition of adenosine monophosphate (AMP) or uridine monophosphate (UMP) to a protein, resulting in modifications known as AMPylation and UMPylation. The sequence is that of Protein nucleotidyltransferase YdiU from Shewanella sp. (strain MR-7).